The following is a 389-amino-acid chain: Chorismate synthase (389 aa).

Residues R40 and R46 each coordinate NADP(+). Residues 130–132 (RAS), 251–252 (QA), G297, 312–316 (KPIST), and R338 contribute to the FMN site.

Belongs to the chorismate synthase family. As to quaternary structure, homotetramer. The cofactor is FMNH2.

The enzyme catalyses 5-O-(1-carboxyvinyl)-3-phosphoshikimate = chorismate + phosphate. The protein operates within metabolic intermediate biosynthesis; chorismate biosynthesis; chorismate from D-erythrose 4-phosphate and phosphoenolpyruvate: step 7/7. In terms of biological role, catalyzes the anti-1,4-elimination of the C-3 phosphate and the C-6 proR hydrogen from 5-enolpyruvylshikimate-3-phosphate (EPSP) to yield chorismate, which is the branch point compound that serves as the starting substrate for the three terminal pathways of aromatic amino acid biosynthesis. This reaction introduces a second double bond into the aromatic ring system. The protein is Chorismate synthase of Solibacter usitatus (strain Ellin6076).